The following is a 382-amino-acid chain: Na(+)/H(+) antiporter NhaA 1 (382 aa).

The next 11 membrane-spanning stretches (helical) occupy residues 10-30 (EFSIPLISGVIVALVWANISP), 45-65 (FSFHFIVNDFFMVLFFGIAAA), 87-107 (LLATIGGVVGPVLVYVVLNAL), 116-136 (GWGIPTATDIALAWLVASLVF), 145-165 (FLLLLAIADDAIGLAIIALFY), 170-190 (LPAAPQWLVLVLSGMGAAALL), 211-231 (AGLFMAHLHPALALVFIVPFL), 252-272 (LASFEHEWKVMVDFGLFLFGL), 275-295 (AGVTFGSIGAATWLVLASLVI), 326-346 (LVGLIAGIGLTVALFVAGEAF), and 353-373 (GAAKMGALMSAGCAVLALAAG).

The protein belongs to the NhaA Na(+)/H(+) (TC 2.A.33) antiporter family.

The protein resides in the cell inner membrane. It carries out the reaction Na(+)(in) + 2 H(+)(out) = Na(+)(out) + 2 H(+)(in). Its function is as follows. Na(+)/H(+) antiporter that extrudes sodium in exchange for external protons. In Pelobacter propionicus (strain DSM 2379 / NBRC 103807 / OttBd1), this protein is Na(+)/H(+) antiporter NhaA 1.